The chain runs to 841 residues: Probable outer membrane usher protein EcpC (841 aa).

The signal sequence occupies residues 1–29 (MPLRRFSPGLKAQFAFGMVFLFVQPDASA).

The protein belongs to the EcpC/MatD family.

Functionally, part of the ecpRABCDE operon, which encodes the E.coli common pilus (ECP). ECP is found in both commensal and pathogenic strains and plays a dual role in early-stage biofilm development and host cell recognition. The protein is Probable outer membrane usher protein EcpC (ecpC) of Escherichia coli O157:H7.